The chain runs to 430 residues: Glutamate-1-semialdehyde 2,1-aminomutase 2 (430 aa).

Lys269 is modified (N6-(pyridoxal phosphate)lysine).

It belongs to the class-III pyridoxal-phosphate-dependent aminotransferase family. HemL subfamily. In terms of assembly, homodimer. Requires pyridoxal 5'-phosphate as cofactor.

It localises to the cytoplasm. The catalysed reaction is (S)-4-amino-5-oxopentanoate = 5-aminolevulinate. Its pathway is porphyrin-containing compound metabolism; protoporphyrin-IX biosynthesis; 5-aminolevulinate from L-glutamyl-tRNA(Glu): step 2/2. This is Glutamate-1-semialdehyde 2,1-aminomutase 2 from Lysinibacillus sphaericus (strain C3-41).